The primary structure comprises 341 residues: Glyceraldehyde-3-phosphate dehydrogenase 3.1 (341 aa).

Residues 13–14 (RI), aspartate 35, and arginine 85 each bind NAD(+). D-glyceraldehyde 3-phosphate contacts are provided by residues 157–159 (SCT), threonine 188, 217–218 (TG), and arginine 240. Cysteine 158 serves as the catalytic Nucleophile. Asparagine 322 serves as a coordination point for NAD(+).

The protein belongs to the glyceraldehyde-3-phosphate dehydrogenase family. As to quaternary structure, homotetramer.

It is found in the cytoplasm. It carries out the reaction D-glyceraldehyde 3-phosphate + phosphate + NAD(+) = (2R)-3-phospho-glyceroyl phosphate + NADH + H(+). It functions in the pathway carbohydrate degradation; glycolysis; pyruvate from D-glyceraldehyde 3-phosphate: step 1/5. This chain is Glyceraldehyde-3-phosphate dehydrogenase 3.1, found in Caenorhabditis briggsae.